The primary structure comprises 449 residues: Nucleoporin NUP42 (449 aa).

A C3H1-type zinc finger spans residues 1–25 (MAICSFFLQGRCRYGEKCWNEHPRG). 2 disordered regions span residues 22 to 84 (HPRG…GFDN) and 218 to 237 (DMTS…SSFP). Polar residues-rich tracts occupy residues 47–83 (WGSS…SGFD) and 218–227 (DMTSGYNGQQ). FG repeat units follow at residues 231–232 (FG), 274–275 (FG), 284–285 (FG), 305–306 (FG), 314–315 (FG), 335–336 (FG), and 347–348 (FG).

As to quaternary structure, probable component of the nuclear pore complex (NPC).

It is found in the nucleus. Its subcellular location is the nuclear pore complex. It localises to the nucleus membrane. Functionally, required for the export of mRNAs containing poly(A) tails from the nucleus into the cytoplasm. The protein is Nucleoporin NUP42 (nup42) of Xenopus tropicalis (Western clawed frog).